The following is a 33-amino-acid chain: DNA-directed RNA polymerase subunit beta' (33 aa).

It belongs to the RNA polymerase beta' chain family. RpoC1 subfamily. In plastids the minimal PEP RNA polymerase catalytic core is composed of four subunits: alpha, beta, beta', and beta''. When a (nuclear-encoded) sigma factor is associated with the core the holoenzyme is formed, which can initiate transcription.

It is found in the plastid. It localises to the chloroplast. It catalyses the reaction RNA(n) + a ribonucleoside 5'-triphosphate = RNA(n+1) + diphosphate. In terms of biological role, DNA-dependent RNA polymerase catalyzes the transcription of DNA into RNA using the four ribonucleoside triphosphates as substrates. In Heterosigma akashiwo (Chromophytic alga), this protein is DNA-directed RNA polymerase subunit beta' (rpoC1).